We begin with the raw amino-acid sequence, 113 residues long: Putative pterin-4-alpha-carbinolamine dehydratase (113 aa).

It belongs to the pterin-4-alpha-carbinolamine dehydratase family.

It catalyses the reaction (4aS,6R)-4a-hydroxy-L-erythro-5,6,7,8-tetrahydrobiopterin = (6R)-L-erythro-6,7-dihydrobiopterin + H2O. The sequence is that of Putative pterin-4-alpha-carbinolamine dehydratase from Hydrogenovibrio crunogenus (strain DSM 25203 / XCL-2) (Thiomicrospira crunogena).